The following is a 1679-amino-acid chain: [F-actin]-monooxygenase mical2b (1679 aa).

A monooxygenase domain region spans residues 2–494; sequence GETEEERTSQ…RHLFISGEQD (493 aa). Residues cysteine 97, 97–125, glutamate 116, arginine 118, arginine 123, asparagine 125, and aspartate 398 contribute to the FAD site; that span reads CGFR…SRNN. The Calponin-homology (CH) domain occupies 516-619; sequence EVRPGRLLLW…MVLYLSKFYE (104 aa). The short motif at 658–679 is the Nuclear localization signal element; the sequence is RKRIPKLDKKLEESDVNRKRKK. Disordered regions lie at residues 661-772, 818-838, 874-907, 1073-1163, 1194-1247, 1259-1283, 1302-1342, and 1473-1509; these read IPKL…KAKW, SAYK…TPTL, SSLF…ESST, STRH…RSTA, KPED…DEIP, EYPK…ISFS, DLTN…PAPP, and RNKA…KKKE. Basic and acidic residues-rich tracts occupy residues 662-674 and 697-707; these read PKLD…SDVN and GEREEQKENKV. A compositionally biased stretch (polar residues) spans 874–888; the sequence is SSLFTGNPAQPQTDE. Positions 1011–1073 constitute an LIM zinc-binding domain; that stretch reads DTCVFCQKRV…KMHFSQRKTS (63 aa). Residues 1086 to 1099 are compositionally biased toward low complexity; sequence IRSSSITISNHTST. Positions 1112-1123 are enriched in polar residues; it reads DSSTQQDLQTLP. The segment covering 1133 to 1143 has biased composition (basic and acidic residues); the sequence is EVKDSSKKADP. Residues 1144–1154 show a composition bias toward low complexity; it reads ADSAPACPDSP. A compositionally biased stretch (acidic residues) spans 1202–1211; it reads LAEEDGNSDF. A compositionally biased stretch (polar residues) spans 1220–1242; the sequence is SKKPSNPSTDSNCLPTKDNSSTP. A compositionally biased stretch (low complexity) spans 1259–1270; the sequence is EYPKPSSSSPEP. The span at 1302 to 1325 shows a compositional bias: polar residues; sequence DLTNPGKSGAEEQQQQHVKPSISL. The span at 1333–1342 shows a compositional bias: pro residues; sequence THPQPEPAPP. Positions 1475-1489 are enriched in low complexity; it reads KASAQQQQQQKSNSS. One can recognise a bMERB domain in the interval 1517-1667; it reads KSDELKRLHR…EKAEDRDLES (151 aa).

The protein belongs to the Mical family. It depends on FAD as a cofactor.

Its subcellular location is the nucleus. It is found in the cytoplasm. It catalyses the reaction L-methionyl-[F-actin] + NADPH + O2 + H(+) = L-methionyl-(R)-S-oxide-[F-actin] + NADP(+) + H2O. Its function is as follows. Nuclear monooxygenase that promotes depolymerization of F-actin by mediating oxidation of specific methionine residues on actin and regulates the srf signaling. Acts by modifying nuclear actin subunits through the addition of oxygen to form methionine-sulfoxide, leading to promote actin filament severing and prevent repolymerization. Acts as a key regulator of the srf signaling pathway elicited by nerve growth factor and serum: mediates oxidation and subsequent depolymerization of nuclear actin, leading to increase mkl1/mrtf-a presence in the nucleus and promote srf:mkl1/mrtf-a-dependent gene transcription. The protein is [F-actin]-monooxygenase mical2b of Danio rerio (Zebrafish).